Here is a 586-residue protein sequence, read N- to C-terminus: Phosphomethylpyrimidine synthase (586 aa).

Disordered stretches follow at residues 38 to 59 (IELSDTNGVPNSPIRVYDTSGP) and 92 to 114 (GREIKPEDDGVKAASNHTPVFPQ). Basic and acidic residues predominate over residues 92 to 102 (GREIKPEDDGV). Residues Asn-193, Met-222, Tyr-251, His-287, 307 to 309 (SRG), 348 to 351 (DGLR), and Glu-387 each bind substrate. Residue His-391 coordinates Zn(2+). Substrate is bound at residue Tyr-414. His-455 contributes to the Zn(2+) binding site. Cys-535, Cys-538, and Cys-543 together coordinate [4Fe-4S] cluster.

Belongs to the ThiC family. The cofactor is [4Fe-4S] cluster.

The catalysed reaction is 5-amino-1-(5-phospho-beta-D-ribosyl)imidazole + S-adenosyl-L-methionine = 4-amino-2-methyl-5-(phosphooxymethyl)pyrimidine + CO + 5'-deoxyadenosine + formate + L-methionine + 3 H(+). It functions in the pathway cofactor biosynthesis; thiamine diphosphate biosynthesis. Catalyzes the synthesis of the hydroxymethylpyrimidine phosphate (HMP-P) moiety of thiamine from aminoimidazole ribotide (AIR) in a radical S-adenosyl-L-methionine (SAM)-dependent reaction. This is Phosphomethylpyrimidine synthase from Bacillus cytotoxicus (strain DSM 22905 / CIP 110041 / 391-98 / NVH 391-98).